A 414-amino-acid chain; its full sequence is DNA primase large subunit PriL (414 aa).

Residues Cys-251, Cys-352, Cys-370, and Cys-376 each coordinate [4Fe-4S] cluster.

It belongs to the eukaryotic-type primase large subunit family. Heterodimer of a small subunit (PriS) and a large subunit (PriL). [4Fe-4S] cluster is required as a cofactor.

In terms of biological role, regulatory subunit of DNA primase, an RNA polymerase that catalyzes the synthesis of short RNA molecules used as primers for DNA polymerase during DNA replication. Stabilizes and modulates the activity of the small subunit, increasing the rate of DNA synthesis, and conferring RNA synthesis capability. The DNA polymerase activity may enable DNA primase to also catalyze primer extension after primer synthesis. May also play a role in DNA repair. This Methanocaldococcus jannaschii (strain ATCC 43067 / DSM 2661 / JAL-1 / JCM 10045 / NBRC 100440) (Methanococcus jannaschii) protein is DNA primase large subunit PriL.